The chain runs to 941 residues: Replicative DNA helicase DnaB (941 aa).

The segment at 1–25 (MAEFEERPRLSIGEEEAPPYPLEKL) is disordered. The region spanning 214–484 (RPGGITGVPS…PVYRLTTRLG (271 aa)) is the SF4 helicase; first part domain. 245 to 252 (ARPSMGKT) provides a ligand contact to ATP. In terms of domain architecture, DOD-type homing endonuclease spans 534 to 683 (LLGHLIGDGC…VQSLLLRLGI (150 aa)). Residues 646-915 (DGCIQMRRGK…ARFENLTMYQ (270 aa)) form the SF4 helicase; second part domain. The tract at residues 914-941 (YQPEPGTPLPETPDETILPSGPPDEAPF) is disordered.

This sequence belongs to the helicase family. DnaB subfamily. Homohexamer. Upon expression in E.coli this protein undergoes self splicing that involves a post-translational excision of the intervening region (intein) followed by peptide ligation.

The catalysed reaction is Couples ATP hydrolysis with the unwinding of duplex DNA at the replication fork by translocating in the 5'-3' direction. This creates two antiparallel DNA single strands (ssDNA). The leading ssDNA polymer is the template for DNA polymerase III holoenzyme which synthesizes a continuous strand.. The enzyme catalyses ATP + H2O = ADP + phosphate + H(+). Its function is as follows. The main replicative DNA helicase, it participates in initiation and elongation during chromosome replication. Travels ahead of the DNA replisome, separating dsDNA into templates for DNA synthesis. A processive ATP-dependent 5'-3' DNA helicase it has DNA-dependent ATPase activity. Functionally, the intein is an endonuclease. This Rhodothermus marinus (Rhodothermus obamensis) protein is Replicative DNA helicase DnaB.